Reading from the N-terminus, the 275-residue chain is Large ribosomal subunit protein uL2 (275 aa).

Disordered regions lie at residues 34 to 59 (LEKK…GGHK) and 223 to 275 (VAMN…RNKK).

This sequence belongs to the universal ribosomal protein uL2 family. Part of the 50S ribosomal subunit. Forms a bridge to the 30S subunit in the 70S ribosome.

In terms of biological role, one of the primary rRNA binding proteins. Required for association of the 30S and 50S subunits to form the 70S ribosome, for tRNA binding and peptide bond formation. It has been suggested to have peptidyltransferase activity; this is somewhat controversial. Makes several contacts with the 16S rRNA in the 70S ribosome. This is Large ribosomal subunit protein uL2 from Teredinibacter turnerae (strain ATCC 39867 / T7901).